We begin with the raw amino-acid sequence, 272 residues long: Universal stress protein MT2699 (272 aa).

ATP-binding positions include glycine 15, glycine 109–arginine 115, and serine 123–threonine 124.

The protein belongs to the universal stress protein A family.

This Mycobacterium tuberculosis (strain CDC 1551 / Oshkosh) protein is Universal stress protein MT2699.